A 210-amino-acid chain; its full sequence is Somatotropin (210 aa).

The first 23 residues, 1–23, serve as a signal peptide directing secretion; the sequence is MARALVLLSVVLVSLLVNQGTAS. Residue H38 coordinates Zn(2+). C71 and C183 form a disulfide bridge. Residue E192 participates in Zn(2+) binding. C200 and C208 form a disulfide bridge.

This sequence belongs to the somatotropin/prolactin family.

Its subcellular location is the secreted. In terms of biological role, growth hormone plays an important role in growth control. This chain is Somatotropin (gh), found in Ctenopharyngodon idella (Grass carp).